Here is an 87-residue protein sequence, read N- to C-terminus: Exodeoxyribonuclease 7 small subunit (87 aa).

This sequence belongs to the XseB family. In terms of assembly, heterooligomer composed of large and small subunits.

Its subcellular location is the cytoplasm. The enzyme catalyses Exonucleolytic cleavage in either 5'- to 3'- or 3'- to 5'-direction to yield nucleoside 5'-phosphates.. Bidirectionally degrades single-stranded DNA into large acid-insoluble oligonucleotides, which are then degraded further into small acid-soluble oligonucleotides. In Halorhodospira halophila (strain DSM 244 / SL1) (Ectothiorhodospira halophila (strain DSM 244 / SL1)), this protein is Exodeoxyribonuclease 7 small subunit.